Reading from the N-terminus, the 476-residue chain is Protein transport protein Sec61 subunit alpha (476 aa).

Residues 2-33 are Cytoplasmic-facing; it reads GIKFLEVIKPFCAVLPEIQKPERKIQFREKVL. The helical transmembrane segment at 34–53 threads the bilayer; that stretch reads WTAITLFIFLVCCQIPLFGI. Residues 54–76 are Lumenal-facing; that stretch reads MSSDSADPFYWMRVILASNRGTL. Residues 77-96 traverse the membrane as a helical segment; the sequence is MELGISPIVTSGLIMQLLAG. Topologically, residues 97–117 are cytoplasmic; it reads AKIIEVGDTPKDRALFNGAQK. A helical transmembrane segment spans residues 118–138; the sequence is LFGMIITIGQAIVYVMTGMYG. The Lumenal segment spans residues 139-144; it reads DPSEMG. A helical membrane pass occupies residues 145–165; that stretch reads AGICLLIIIQLFVAGLIVLLL. Residues 166-172 are Cytoplasmic-facing; the sequence is DELLQKG. A helical membrane pass occupies residues 173-193; the sequence is YGLGSGISLFIATNICETIVW. Topologically, residues 194 to 240 are lumenal; it reads KAFSPTTVNTGRGTEFEGAIIALFHLLATRTDKVRALREAFYRQNLP. The helical transmembrane segment at 241–261 threads the bilayer; sequence NILNLIATVFVFAVVIYFQGF. Residues 262-288 are Cytoplasmic-facing; it reads RVDLPIKSARYRGQYNTYPIKLFYTSN. The chain crosses the membrane as a helical span at residues 289–309; sequence IPIILQSALVSNLYVISQMLS. Over 310 to 354 the chain is Lumenal; it reads TRFSGNFLVNLLGTWSDATSGGPARAYPVAGLCYYLSPPESFGSV. The chain crosses the membrane as a helical span at residues 355–375; it reads LDDPVHAAIYIVFMLGSCAFF. At 376-420 the chain is on the cytoplasmic side; sequence SKTWIEVSGSSAKDVAKQLKEQQMVMRGHRETSMVHELNRYIPTA. A helical membrane pass occupies residues 421–441; sequence AAFGGLCIGGLSVMADFLGAI. Residues 442-445 lie on the Lumenal side of the membrane; it reads GSGT. The helical transmembrane segment at 446 to 462 threads the bilayer; it reads GILLAVTIIYQYFEIFV. Over 463–476 the chain is Cytoplasmic; the sequence is KEQSEMGSMGALLF.

Belongs to the SecY/SEC61-alpha family. The SEC61 channel-forming translocon complex consists of channel-forming core components SEC61A1, SEC61B and SEC61G and different auxiliary components such as SEC62 and SEC63. The SEC61 channel associates with the multi-pass translocon (MPT) complex.

It is found in the endoplasmic reticulum membrane. Functionally, component of SEC61 channel-forming translocon complex that mediates transport of signal peptide-containing precursor polypeptides across the endoplasmic reticulum (ER). Forms a ribosome receptor and a gated pore in the ER membrane, both functions required for cotranslational translocation of nascent polypeptides. May cooperate with auxiliary protein SEC62, SEC63 and HSPA5/BiP to enable post-translational transport of small presecretory proteins. The SEC61 channel is also involved in ER membrane insertion of transmembrane proteins: it mediates membrane insertion of the first few transmembrane segments of proteins, while insertion of subsequent transmembrane regions of multi-pass membrane proteins is mediated by the multi-pass translocon (MPT) complex. The protein is Protein transport protein Sec61 subunit alpha (sec61a) of Dissostichus mawsoni (Antarctic cod).